The chain runs to 270 residues: Tryptophan synthase alpha chain (270 aa).

Residues glutamate 57 and aspartate 68 each act as proton acceptor in the active site.

Belongs to the TrpA family. Tetramer of two alpha and two beta chains.

It carries out the reaction (1S,2R)-1-C-(indol-3-yl)glycerol 3-phosphate + L-serine = D-glyceraldehyde 3-phosphate + L-tryptophan + H2O. Its pathway is amino-acid biosynthesis; L-tryptophan biosynthesis; L-tryptophan from chorismate: step 5/5. The alpha subunit is responsible for the aldol cleavage of indoleglycerol phosphate to indole and glyceraldehyde 3-phosphate. The protein is Tryptophan synthase alpha chain of Mycobacterium leprae (strain Br4923).